Consider the following 256-residue polypeptide: MLKFVILVCSVACVFGAVVPGGMLPQLDGRIVGGFEADIEDFPWQVSIQRGGYHFCGGSIYSPEIIVTAAHCLEKIDASQLRVRVGGSYWDEEGSLLTVSNFKIHEKYDAMIMWYDVALLKLSSKLTYGATVKNIELAKETPPDNADAVVSGWGTIYENYPYMPVQLRSVDVKIVSREVCRSDEYGYGNAIGPTMICAYAVGKDACQGDSGGPLVVGEALVGVVSWGEGCAYPGFPGVYTDVSVVRSWITENAKSF.

The signal sequence occupies residues 1–22 (MLKFVILVCSVACVFGAVVPGG). The propeptide at 23–30 (MLPQLDGR) is activation peptide. A Peptidase S1 domain is found at 31-254 (IVGGFEADIE…VRSWITENAK (224 aa)). An intrachain disulfide couples Cys56 to Cys72. Catalysis depends on charge relay system residues His71 and Asp116. Cystine bridges form between Cys180-Cys197 and Cys206-Cys230. Catalysis depends on Ser210, which acts as the Charge relay system.

It belongs to the peptidase S1 family.

Its subcellular location is the secreted. Protease that shows preferential cleavage after Arg and Lys residues. In Hypoderma lineatum (Early cattle grub), this protein is Hypodermin-B.